The sequence spans 295 residues: Small ribosomal subunit protein uS2 (295 aa).

A disordered region spans residues 263 to 295 (KKFSKTKNIDEETNTEFEKALNDADENKNSDNA). Basic and acidic residues predominate over residues 278–295 (EFEKALNDADENKNSDNA).

Belongs to the universal ribosomal protein uS2 family.

The chain is Small ribosomal subunit protein uS2 from Rickettsia peacockii (strain Rustic).